The following is a 118-amino-acid chain: Basic phospholipase A2 4 (118 aa).

Disulfide bonds link Cys11–Cys71, Cys27–Cys117, Cys29–Cys45, Cys44–Cys98, Cys51–Cys91, Cys60–Cys84, and Cys78–Cys89. Residues Tyr28, Gly30, and Gly32 each contribute to the Ca(2+) site. The active site involves His48. Position 49 (Asp49) interacts with Ca(2+). Asp92 is an active-site residue.

Belongs to the phospholipase A2 family. Group I subfamily. D49 sub-subfamily. In terms of assembly, monomer. Requires Ca(2+) as cofactor. As to expression, expressed by the venom gland.

It is found in the secreted. It carries out the reaction a 1,2-diacyl-sn-glycero-3-phosphocholine + H2O = a 1-acyl-sn-glycero-3-phosphocholine + a fatty acid + H(+). Its function is as follows. PLA2 catalyzes the calcium-dependent hydrolysis of the 2-acyl groups in 3-sn-phosphoglycerides. This Laticauda semifasciata (Black-banded sea krait) protein is Basic phospholipase A2 4.